The following is a 703-amino-acid chain: Prolyl 3-hydroxylase 2 (703 aa).

Positions 1-21 (MRESTWVSLLLLLLLPAPQRG) are cleaved as a signal peptide. Residues 18 to 40 (PQRGGPQDGRGSPEPEPERGPLQ) are disordered. 4 TPR repeats span residues 42 to 75 (FDLLYASGVAAYYSGDYEGAVRDLEAALRSHRRL), 144 to 177 (RVPYNYLQRAYIKLNQLDKAMEAAHTFFMANPEH), 205 to 238 (HLESYNAGVKHYEADDFEAAIKYFEQALREYFNE), and 301 to 334 (PLHYDYLQFAYYRVGEYVKALECAKAYLMFHPDD). 3 N-linked (GlcNAc...) asparagine glycosylation sites follow: N444, N455, and N544. Residues 552-666 (THMVCRTALS…RCAVALWFTL (115 aa)) enclose the Fe2OG dioxygenase domain. Residues H575, D577, and H647 each contribute to the Fe cation site. R657 is a catalytic residue. Positions 700-703 (KDEL) match the Prevents secretion from ER motif.

This sequence belongs to the leprecan family. Fe cation serves as cofactor. L-ascorbate is required as a cofactor. Detected at low levels in cartilage.

Its subcellular location is the endoplasmic reticulum. The protein resides in the sarcoplasmic reticulum. The protein localises to the golgi apparatus. It catalyses the reaction L-prolyl-[collagen] + 2-oxoglutarate + O2 = trans-3-hydroxy-L-prolyl-[collagen] + succinate + CO2. Prolyl 3-hydroxylase that catalyzes the post-translational formation of 3-hydroxyproline on collagens. Contributes to proline 3-hydroxylation of collagen COL4A1 and COL1A1 in tendons, the eye sclera and in the eye lens capsule. Has high activity with the type IV collagen COL4A1, and lower activity with COL1A1. Catalyzes hydroxylation of the first Pro in Gly-Pro-Hyp sequences where Hyp is 4-hydroxyproline. Has no activity on substrates that lack 4-hydroxyproline in the third position. This chain is Prolyl 3-hydroxylase 2, found in Rattus norvegicus (Rat).